A 148-amino-acid polypeptide reads, in one-letter code: Large ribosomal subunit protein bL9 (148 aa).

Belongs to the bacterial ribosomal protein bL9 family.

In terms of biological role, binds to the 23S rRNA. This chain is Large ribosomal subunit protein bL9, found in Staphylococcus aureus (strain bovine RF122 / ET3-1).